A 227-amino-acid polypeptide reads, in one-letter code: Cytochrome c oxidase subunit 2 (227 aa).

The Mitochondrial intermembrane portion of the chain corresponds to 1–14; sequence MPYPLQLGLQDATS. The helical transmembrane segment at 15–45 threads the bilayer; it reads PIMEELTHFHDHTLMIVFLISSLVLYIISSM. At 46–59 the chain is on the mitochondrial matrix side; the sequence is LTTKLTHTSTMDAQ. Residues 60 to 87 traverse the membrane as a helical segment; that stretch reads EVETIWTILPAMILILIALPSLRILYMM. Residues 88–227 lie on the Mitochondrial intermembrane side of the membrane; it reads DEINDPSLTV…YFEDWSASLL (140 aa). Cu cation contacts are provided by His-161, Cys-196, Glu-198, Cys-200, His-204, and Met-207. Glu-198 lines the Mg(2+) pocket.

Belongs to the cytochrome c oxidase subunit 2 family. In terms of assembly, component of the cytochrome c oxidase (complex IV, CIV), a multisubunit enzyme composed of 14 subunits. The complex is composed of a catalytic core of 3 subunits MT-CO1, MT-CO2 and MT-CO3, encoded in the mitochondrial DNA, and 11 supernumerary subunits COX4I, COX5A, COX5B, COX6A, COX6B, COX6C, COX7A, COX7B, COX7C, COX8 and NDUFA4, which are encoded in the nuclear genome. The complex exists as a monomer or a dimer and forms supercomplexes (SCs) in the inner mitochondrial membrane with NADH-ubiquinone oxidoreductase (complex I, CI) and ubiquinol-cytochrome c oxidoreductase (cytochrome b-c1 complex, complex III, CIII), resulting in different assemblies (supercomplex SCI(1)III(2)IV(1) and megacomplex MCI(2)III(2)IV(2)). Found in a complex with TMEM177, COA6, COX18, COX20, SCO1 and SCO2. Interacts with TMEM177 in a COX20-dependent manner. Interacts with COX20. Interacts with COX16. Cu cation serves as cofactor.

It is found in the mitochondrion inner membrane. The enzyme catalyses 4 Fe(II)-[cytochrome c] + O2 + 8 H(+)(in) = 4 Fe(III)-[cytochrome c] + 2 H2O + 4 H(+)(out). Its function is as follows. Component of the cytochrome c oxidase, the last enzyme in the mitochondrial electron transport chain which drives oxidative phosphorylation. The respiratory chain contains 3 multisubunit complexes succinate dehydrogenase (complex II, CII), ubiquinol-cytochrome c oxidoreductase (cytochrome b-c1 complex, complex III, CIII) and cytochrome c oxidase (complex IV, CIV), that cooperate to transfer electrons derived from NADH and succinate to molecular oxygen, creating an electrochemical gradient over the inner membrane that drives transmembrane transport and the ATP synthase. Cytochrome c oxidase is the component of the respiratory chain that catalyzes the reduction of oxygen to water. Electrons originating from reduced cytochrome c in the intermembrane space (IMS) are transferred via the dinuclear copper A center (CU(A)) of subunit 2 and heme A of subunit 1 to the active site in subunit 1, a binuclear center (BNC) formed by heme A3 and copper B (CU(B)). The BNC reduces molecular oxygen to 2 water molecules using 4 electrons from cytochrome c in the IMS and 4 protons from the mitochondrial matrix. This chain is Cytochrome c oxidase subunit 2 (MT-CO2), found in Dugong dugon (Dugong).